Reading from the N-terminus, the 430-residue chain is Serine--tRNA ligase (430 aa).

237–239 (TAE) provides a ligand contact to L-serine. 268 to 270 (RSE) is an ATP binding site. Glu291 contacts L-serine. 355-358 (EISS) provides a ligand contact to ATP. L-serine is bound at residue Ser391.

Belongs to the class-II aminoacyl-tRNA synthetase family. Type-1 seryl-tRNA synthetase subfamily. Homodimer. The tRNA molecule binds across the dimer.

It localises to the cytoplasm. The enzyme catalyses tRNA(Ser) + L-serine + ATP = L-seryl-tRNA(Ser) + AMP + diphosphate + H(+). It catalyses the reaction tRNA(Sec) + L-serine + ATP = L-seryl-tRNA(Sec) + AMP + diphosphate + H(+). The protein operates within aminoacyl-tRNA biosynthesis; selenocysteinyl-tRNA(Sec) biosynthesis; L-seryl-tRNA(Sec) from L-serine and tRNA(Sec): step 1/1. Catalyzes the attachment of serine to tRNA(Ser). Is also able to aminoacylate tRNA(Sec) with serine, to form the misacylated tRNA L-seryl-tRNA(Sec), which will be further converted into selenocysteinyl-tRNA(Sec). The sequence is that of Serine--tRNA ligase from Yersinia enterocolitica serotype O:8 / biotype 1B (strain NCTC 13174 / 8081).